A 385-amino-acid chain; its full sequence is MDEIINKYQAVEKLFKEIQEGLAAYDQYKTLISELLHYNNHIKQEYFNFLMIISPYLIRAHSGETLRNKVNNEIKRLILVENINTKISKTLVSVNFLLQKKLSVDGVKTKNMWCTNNPMLQVKTAHNLFKQLCDTQSKTQWVQTLKYKECKYCHTDMVFNTTQFGLQCPNCGCIQELMGTIFDETHFYNHDGQKAKSGIFNPNRHYRFWIEHILGRNSEQELGTKQDPCGTKVLQQLKKIIKRDNKCIALLTVENIRKMLKEINRTDLNNCVSLILRKLTGVGPPQISESILLRGEYIFTEAIKIREKVCKKGRINRNYYPYYIYKIFDAILPPNDTTNRRILQYIHLQGNDTLANNDSEWESICMELPEIKWKPTDRTHCVHFF.

C2H2-type zinc fingers lie at residues Leu-166 to His-190 and Cys-168 to His-190.

The protein belongs to the asfivirus B385R family.

The chain is Zinc finger protein B385R from African swine fever virus (isolate Tick/Malawi/Lil 20-1/1983) (ASFV).